The sequence spans 588 residues: Phosphatidylinositol-3,5-bisphosphate 3-phosphatase mtm-1 (588 aa).

The 72-residue stretch at 20–91 (IQESIDLKLL…GQVSRIEKVG (72 aa)) folds into the GRAM domain. The 380-residue stretch at 164–543 (GWKIYSAEKE…CGLHVWIDYY (380 aa)) folds into the Myotubularin phosphatase domain. A 1,2-diacyl-sn-glycero-3-phospho-(1D-myo-inositol-3,5-bisphosphate) is bound by residues asparagine 293, asparagine 316, and isoleucine 317. Asparagine 293, asparagine 316, and isoleucine 317 together coordinate a 1,2-diacyl-sn-glycero-3-phospho-(1D-myo-inositol-3-phosphate). Catalysis depends on cysteine 378, which acts as the Phosphocysteine intermediate. Residues serine 379, aspartate 380, glycine 381, tryptophan 382, aspartate 383, arginine 384, lysine 420, and arginine 424 each coordinate a 1,2-diacyl-sn-glycero-3-phospho-(1D-myo-inositol-3,5-bisphosphate). A 1,2-diacyl-sn-glycero-3-phospho-(1D-myo-inositol-3-phosphate) contacts are provided by serine 379, aspartate 380, glycine 381, tryptophan 382, aspartate 383, and arginine 384. Serine 379 provides a ligand contact to phosphate. Phosphate-binding residues include glycine 381, tryptophan 382, aspartate 383, and arginine 384. Residue arginine 424 participates in a 1,2-diacyl-sn-glycero-3-phospho-(1D-myo-inositol-3-phosphate) binding. Residues 563 to 588 (AQFVDEKKQLLDEIMALDDAAQKLTA) are a coiled coil.

The protein belongs to the protein-tyrosine phosphatase family. Non-receptor class myotubularin subfamily. Expressed in embryo, larva and in adults. Expressed in a few head and tail neurons. Expressed in hypodermis, body wall and pharyngeal muscles, sheath cells, vulva, distal tip cells and coelomocytes.

The protein resides in the cell membrane. The protein localises to the cell projection. It is found in the phagocytic cup. It localises to the apical cell membrane. Its subcellular location is the cytoplasmic granule membrane. It carries out the reaction a 1,2-diacyl-sn-glycero-3-phospho-(1D-myo-inositol-3,5-bisphosphate) + H2O = a 1,2-diacyl-sn-glycero-3-phospho-(1D-myo-inositol-5-phosphate) + phosphate. The catalysed reaction is a 1,2-diacyl-sn-glycero-3-phospho-(1D-myo-inositol-3-phosphate) + H2O = a 1,2-diacyl-sn-glycero-3-phospho-(1D-myo-inositol) + phosphate. The enzyme catalyses 1,2-dioctanoyl-sn-glycero-3-phospho-(1-D-myo-inositol-3-phosphate) + H2O = 1,2-dioctanoyl-sn-glycero-3-phospho-(1D-myo-inositol) + phosphate. Lipid phosphatase that specifically dephosphorylates phosphatidylinositol 3-phosphate (PI3P) and phosphatidylinositol 3,5-bisphosphate (PI(3,5)P2). Negatively regulates accumulation of PI3P on intracellular vesicles. Negatively regulates phagocytosis of apoptotic cells probably by limiting the recruitment and/or the activation of ced-5, ced-2 and ced-12 complex. In addition, may positively regulate phagosome maturation by promoting recycling of apoptotic receptor ced-1 back to the plasma membrane. Essential for embryonic and larval development. May promote migration of distal tip cells. This chain is Phosphatidylinositol-3,5-bisphosphate 3-phosphatase mtm-1, found in Caenorhabditis elegans.